Here is a 130-residue protein sequence, read N- to C-terminus: Histone H2A type 4 (130 aa).

A Phosphoserine; by RPS6KA5 modification is found at Ser2. At Arg4 the chain carries Citrulline; alternate. At Arg4 the chain carries Symmetric dimethylarginine; by PRMT5; alternate. Residues Lys6 and Lys10 each carry the N6-(2-hydroxyisobutyryl)lysine; alternate modification. N6-acetyllysine; alternate occurs at positions 6 and 10. Position 10 is an N6-lactoyllysine; alternate (Lys10). Lys75, Lys76, and Lys96 each carry N6-(2-hydroxyisobutyryl)lysine. The residue at position 96 (Lys96) is an N6-glutaryllysine; alternate. N5-methylglutamine is present on Gln105. Lys119 is modified (N6-(2-hydroxyisobutyryl)lysine; alternate). Lys119 and Lys120 each carry N6-glutaryllysine; alternate. Lys119 is modified (N6-crotonyllysine; alternate). Lys120 is modified (N6-crotonyllysine). Thr121 is modified (phosphothreonine; by DCAF1). Lys126 is modified (N6-glutaryllysine; alternate). Residue Lys126 is modified to N6-crotonyllysine; alternate. Residues 127 to 128 carry the [ST]-Q motif motif; sequence SQ.

This sequence belongs to the histone H2A family. In terms of assembly, the nucleosome is a histone octamer containing two molecules each of H2A, H2B, H3 and H4 assembled in one H3-H4 heterotetramer and two H2A-H2B heterodimers. The octamer wraps approximately 147 bp of DNA. In terms of processing, deiminated on Arg-4 in granulocytes upon calcium entry. Post-translationally, monoubiquitination of Lys-120 (H2AK119Ub) by RING1, TRIM37 and RNF2/RING2 complex gives a specific tag for epigenetic transcriptional repression and participates in X chromosome inactivation of female mammals. It is involved in the initiation of both imprinted and random X inactivation. Ubiquitinated H2A is enriched in inactive X chromosome chromatin. Ubiquitination of H2A functions downstream of methylation of 'Lys-27' of histone H3 (H3K27me). H2AK119Ub by RNF2/RING2 can also be induced by ultraviolet and may be involved in DNA repair. Following DNA double-strand breaks (DSBs), it is ubiquitinated through 'Lys-63' linkage of ubiquitin moieties by the E2 ligase UBE2N and the E3 ligases RNF8 and RNF168, leading to the recruitment of repair proteins to sites of DNA damage. Ubiquitination at Lys-14 and Lys-16 (H2AK13Ub and H2AK15Ub, respectively) in response to DNA damage is initiated by RNF168 that mediates monoubiquitination at these 2 sites, and 'Lys-63'-linked ubiquitin are then conjugated to monoubiquitin; RNF8 is able to extend 'Lys-63'-linked ubiquitin chains in vitro. H2AK119Ub and ionizing radiation-induced 'Lys-63'-linked ubiquitination (H2AK13Ub and H2AK15Ub) are distinct events. Phosphorylation on Ser-2 (H2AS1ph) is enhanced during mitosis. Phosphorylation on Ser-2 by RPS6KA5/MSK1 directly represses transcription. Acetylation of H3 inhibits Ser-2 phosphorylation by RPS6KA5/MSK1. Phosphorylation at Thr-121 (H2AT120ph) by DCAF1 is present in the regulatory region of many tumor suppresor genes and down-regulates their transcription. In terms of processing, symmetric dimethylation on Arg-4 by the PRDM1/PRMT5 complex may play a crucial role in the germ-cell lineage. Post-translationally, glutamine methylation at Gln-105 (H2AQ104me) by FBL is specifically dedicated to polymerase I. It is present at 35S ribosomal DNA locus and impairs binding of the FACT complex. Crotonylation (Kcr) is specifically present in male germ cells and marks testis-specific genes in post-meiotic cells, including X-linked genes that escape sex chromosome inactivation in haploid cells. Crotonylation marks active promoters and enhancers and confers resistance to transcriptional repressors. It is also associated with post-meiotically activated genes on autosomes. In terms of processing, lactylated in macrophages by EP300/P300 by using lactoyl-CoA directly derived from endogenous or exogenous lactate, leading to stimulates gene transcription. Testis.

Its subcellular location is the nucleus. The protein localises to the chromosome. Functionally, core component of nucleosome. Nucleosomes wrap and compact DNA into chromatin, limiting DNA accessibility to the cellular machineries which require DNA as a template. Histones thereby play a central role in transcription regulation, DNA repair, DNA replication and chromosomal stability. DNA accessibility is regulated via a complex set of post-translational modifications of histones, also called histone code, and nucleosome remodeling. The protein is Histone H2A type 4 of Rattus norvegicus (Rat).